Here is a 301-residue protein sequence, read N- to C-terminus: Acetylglutamate kinase (301 aa).

Substrate-binding positions include 68-69 (GG), Arg90, and Asn195.

It belongs to the acetylglutamate kinase family. ArgB subfamily.

Its subcellular location is the cytoplasm. It catalyses the reaction N-acetyl-L-glutamate + ATP = N-acetyl-L-glutamyl 5-phosphate + ADP. The protein operates within amino-acid biosynthesis; L-arginine biosynthesis; N(2)-acetyl-L-ornithine from L-glutamate: step 2/4. Its function is as follows. Catalyzes the ATP-dependent phosphorylation of N-acetyl-L-glutamate. This chain is Acetylglutamate kinase, found in Pseudomonas putida (strain GB-1).